We begin with the raw amino-acid sequence, 335 residues long: Holliday junction branch migration complex subunit RuvB (335 aa).

The tract at residues 1–181 is large ATPase domain (RuvB-L); the sequence is MTRILDNDLI…FGITGHMEYY (181 aa). ATP-binding positions include leucine 20, arginine 21, glycine 62, lysine 65, threonine 66, threonine 67, 128 to 130, arginine 171, tyrosine 181, and arginine 218; that span reads EDF. Threonine 66 is a binding site for Mg(2+). Positions 182–252 are small ATPAse domain (RuvB-S); that stretch reads QTADLTEIVE…ITDKALTMLD (71 aa). Positions 255-335 are head domain (RuvB-H); that stretch reads QEGLDYVDQK…GYPYEKTIKT (81 aa). Arginine 291, arginine 310, arginine 312, and arginine 315 together coordinate DNA.

The protein belongs to the RuvB family. In terms of assembly, homohexamer. Forms an RuvA(8)-RuvB(12)-Holliday junction (HJ) complex. HJ DNA is sandwiched between 2 RuvA tetramers; dsDNA enters through RuvA and exits via RuvB. An RuvB hexamer assembles on each DNA strand where it exits the tetramer. Each RuvB hexamer is contacted by two RuvA subunits (via domain III) on 2 adjacent RuvB subunits; this complex drives branch migration. In the full resolvosome a probable DNA-RuvA(4)-RuvB(12)-RuvC(2) complex forms which resolves the HJ.

The protein localises to the cytoplasm. It carries out the reaction ATP + H2O = ADP + phosphate + H(+). The RuvA-RuvB-RuvC complex processes Holliday junction (HJ) DNA during genetic recombination and DNA repair, while the RuvA-RuvB complex plays an important role in the rescue of blocked DNA replication forks via replication fork reversal (RFR). RuvA specifically binds to HJ cruciform DNA, conferring on it an open structure. The RuvB hexamer acts as an ATP-dependent pump, pulling dsDNA into and through the RuvAB complex. RuvB forms 2 homohexamers on either side of HJ DNA bound by 1 or 2 RuvA tetramers; 4 subunits per hexamer contact DNA at a time. Coordinated motions by a converter formed by DNA-disengaged RuvB subunits stimulates ATP hydrolysis and nucleotide exchange. Immobilization of the converter enables RuvB to convert the ATP-contained energy into a lever motion, pulling 2 nucleotides of DNA out of the RuvA tetramer per ATP hydrolyzed, thus driving DNA branch migration. The RuvB motors rotate together with the DNA substrate, which together with the progressing nucleotide cycle form the mechanistic basis for DNA recombination by continuous HJ branch migration. Branch migration allows RuvC to scan DNA until it finds its consensus sequence, where it cleaves and resolves cruciform DNA. In Streptococcus equi subsp. equi (strain 4047), this protein is Holliday junction branch migration complex subunit RuvB.